A 1157-amino-acid polypeptide reads, in one-letter code: Folliculin-interacting protein 1 (1157 aa).

The uDENN FNIP1/2-type domain maps to 37–467 (FDPSQIRLIV…TVMPNGQPPI (431 aa)). Disordered stretches follow at residues 92–120 (PGGDSSSSLDSSINSSSSFSDAKEQCPKY), 616–665 (SQQE…TKVE), 769–796 (SPPTAEEGVSADQNCEAKQTVEDQNRDC), and 904–955 (VPHG…NYYG). The span at 95 to 111 (DSSSSLDSSINSSSSFS) shows a compositional bias: low complexity. The 609-residue stretch at 475-1083 (SSQSVDMLAK…VSNLLHSTLQ (609 aa)) folds into the cDENN FNIP1/2-type domain. A compositionally biased stretch (basic and acidic residues) spans 651–664 (ADGHQPRTCQDTKV). The segment covering 904–916 (VPHGDRENAEKKV) has biased composition (basic and acidic residues). The region spanning 1093 to 1148 (FCVMHLEDRLQELYFKSKMLSEYLKGQMRVHVKELGVVLGIESSDLPLLAAVASTH) is the dDENN FNIP1/2-type domain.

The protein belongs to the FNIP family. Homodimer and homomultimer. Heterodimer and heteromultimer with FNIP2. Component of the lysosomal folliculin complex (LFC).

It localises to the lysosome membrane. The protein localises to the cytoplasm. It is found in the cytosol. Its function is as follows. Binding partner of the GTPase-activating protein FLCN: involved in the cellular response to amino acid availability by regulating the non-canonical mTORC1 signaling cascade controlling the MiT/TFE factors TFEB and TFE3. Required to promote FLCN recruitment to lysosomes and interaction with Rag GTPases, leading to activation of the non-canonical mTORC1 signaling. In low-amino acid conditions, component of the lysosomal folliculin complex (LFC) on the membrane of lysosomes, which inhibits the GTPase-activating activity of FLCN, thereby inactivating mTORC1 and promoting nuclear translocation of TFEB and TFE3. Upon amino acid restimulation, disassembly of the LFC complex liberates the GTPase-activating activity of FLCN, leading to activation of mTORC1 and subsequent inactivation of TFEB and TFE3. In addition to its role in mTORC1 signaling, also acts as a co-chaperone of HSP90AA1/Hsp90: inhibits the ATPase activity of HSP90AA1/Hsp90, leading to activate both kinase and non-kinase client proteins of HSP90AA1/Hsp90. Acts as a scaffold to load client protein FLCN onto HSP90AA1/Hsp90. In Gallus gallus (Chicken), this protein is Folliculin-interacting protein 1.